A 223-amino-acid polypeptide reads, in one-letter code: MSFLVDLGATSYIACYATQQAVVARRCSGDLDRDCFLLTEHPPVYTLGKRGGEQHLHISKEMLAQKGIDVVSIERGGEITYHGPGQLVLYPILHLRKRKMRVTEYVGLLEETMIRLAADFGVRVVRNTRNAGVWTEDGRSKIGSIGIAIRHGVSFHGFAFNLNTDLEPFSWINPCGLTGVTATSLAREAGTDFDPAEVKKRLLSIVADLFGEFTVVDSLHSVK.

One can recognise a BPL/LPL catalytic domain in the interval 30–214 (DLDRDCFLLT…IVADLFGEFT (185 aa)). Residues 75 to 82 (RGGEITYH), 144 to 146 (SIG), and 157 to 159 (GFA) each bind substrate. Residue cysteine 175 is the Acyl-thioester intermediate of the active site.

The protein belongs to the LipB family.

Its subcellular location is the cytoplasm. The enzyme catalyses octanoyl-[ACP] + L-lysyl-[protein] = N(6)-octanoyl-L-lysyl-[protein] + holo-[ACP] + H(+). It participates in protein modification; protein lipoylation via endogenous pathway; protein N(6)-(lipoyl)lysine from octanoyl-[acyl-carrier-protein]: step 1/2. Functionally, catalyzes the transfer of endogenously produced octanoic acid from octanoyl-acyl-carrier-protein onto the lipoyl domains of lipoate-dependent enzymes. Lipoyl-ACP can also act as a substrate although octanoyl-ACP is likely to be the physiological substrate. The protein is Octanoyltransferase of Desulfotalea psychrophila (strain LSv54 / DSM 12343).